The sequence spans 558 residues: MAPLRSSAITQGVQRSPNRAMLRAVGFGDGDFSKPIIGIANGYSTITPCNVGLNDLALRAEAATQAAGGMPQLFGTITVSDGISMGTEGMKYSLVSREVIADAIETACNGQSMDGVLAIGGCDKNMPAAMLAMARMNIPGVFVYGGTIKPGKLGGCDLTVVSAFEAVGQLSSGKIDEAQLTAVEKNACPGAGSCGGMFTANTMSAAIETMGLSLPFSSTMAAEDPEKAESAARSAEVLVEAIAANIRPLDLLTREAFENAISVIMAVGGSTNAVLHLLAIARTAGVPLSIDDFETIRQRVPVICDLKPSGRFVTVDLHNAGGIPQVMKLLLDGGLLHGDCRTVEGKTLREVLADVPSEPPADQEVIRPLSNPLYAKGHLAVLKGNLASEGAVAKISGVKTPVLTGPARVFESEEQCLQAILANQVHAGDVVVVRNEGPVGGPGMREMLAPTAAIVGEGLGDKVALITDGRFSGGTYGLVVGHVAPEAAVGGMIGLVQEGDSITVDAQQQLLQLNVDAAELERRKQAWVKPEPRYRTGVLGKYARLVSSSSKGAVTDQP.

Cysteine 49 contacts [2Fe-2S] cluster. Aspartate 81 lines the Mg(2+) pocket. Cysteine 122 provides a ligand contact to [2Fe-2S] cluster. Residues aspartate 123 and lysine 124 each coordinate Mg(2+). Lysine 124 is subject to N6-carboxylysine. A [2Fe-2S] cluster-binding site is contributed by cysteine 194. Position 446 (glutamate 446) interacts with Mg(2+). The Proton acceptor role is filled by serine 472.

It belongs to the IlvD/Edd family. Homodimer. [2Fe-2S] cluster is required as a cofactor. Mg(2+) serves as cofactor.

It carries out the reaction (2R)-2,3-dihydroxy-3-methylbutanoate = 3-methyl-2-oxobutanoate + H2O. The catalysed reaction is (2R,3R)-2,3-dihydroxy-3-methylpentanoate = (S)-3-methyl-2-oxopentanoate + H2O. Its pathway is amino-acid biosynthesis; L-isoleucine biosynthesis; L-isoleucine from 2-oxobutanoate: step 3/4. The protein operates within amino-acid biosynthesis; L-valine biosynthesis; L-valine from pyruvate: step 3/4. Functions in the biosynthesis of branched-chain amino acids. Catalyzes the dehydration of (2R,3R)-2,3-dihydroxy-3-methylpentanoate (2,3-dihydroxy-3-methylvalerate) into 2-oxo-3-methylpentanoate (2-oxo-3-methylvalerate) and of (2R)-2,3-dihydroxy-3-methylbutanoate (2,3-dihydroxyisovalerate) into 2-oxo-3-methylbutanoate (2-oxoisovalerate), the penultimate precursor to L-isoleucine and L-valine, respectively. The chain is Dihydroxy-acid dehydratase from Synechococcus sp. (strain RCC307).